A 294-amino-acid polypeptide reads, in one-letter code: MEHVPGKKPEWLKIRLSSGASFASTKRLLDRHSLHTVCRSAMCPNLQECWSRGTATFLLLGTVCTRNCRFCAVGKASNPPAPDPREPEKIALAVHSMQLKHTVLTSVTRDDLPDGGAEYWVATIRAIRTLNPFVTIECLIPDFEGNERAMDLVMAELPEILNHNIETVPSLYTKVRPQANYATSLRLLQRAKEMHGLTTKSGMMVGMGETAEEVAISLGDLLLHGCDMVTIGQYLQPSALHLPVERYITPEEFEQYRSFAEGAGFRHVQSGPFVRSSYHAEALTKKTETVCSPI.

Residues cysteine 38, cysteine 43, cysteine 49, cysteine 64, cysteine 68, cysteine 71, and serine 277 each coordinate [4Fe-4S] cluster. The 217-residue stretch at 50-266 folds into the Radical SAM core domain; it reads WSRGTATFLL…RSFAEGAGFR (217 aa).

The protein belongs to the radical SAM superfamily. Lipoyl synthase family. It depends on [4Fe-4S] cluster as a cofactor.

The protein localises to the cytoplasm. The catalysed reaction is [[Fe-S] cluster scaffold protein carrying a second [4Fe-4S](2+) cluster] + N(6)-octanoyl-L-lysyl-[protein] + 2 oxidized [2Fe-2S]-[ferredoxin] + 2 S-adenosyl-L-methionine + 4 H(+) = [[Fe-S] cluster scaffold protein] + N(6)-[(R)-dihydrolipoyl]-L-lysyl-[protein] + 4 Fe(3+) + 2 hydrogen sulfide + 2 5'-deoxyadenosine + 2 L-methionine + 2 reduced [2Fe-2S]-[ferredoxin]. Its pathway is protein modification; protein lipoylation via endogenous pathway; protein N(6)-(lipoyl)lysine from octanoyl-[acyl-carrier-protein]: step 2/2. Catalyzes the radical-mediated insertion of two sulfur atoms into the C-6 and C-8 positions of the octanoyl moiety bound to the lipoyl domains of lipoate-dependent enzymes, thereby converting the octanoylated domains into lipoylated derivatives. The chain is Lipoyl synthase from Pelodictyon phaeoclathratiforme (strain DSM 5477 / BU-1).